The sequence spans 2276 residues: Non-reducing polyketide synthase VdtA (2276 aa).

The segment at 8–243 (YLFGDQTYDY…KDIPIHAPYH (236 aa)) is N-terminal acylcarrier protein transacylase (SAT) domain. The Ketosynthase family 3 (KS3) domain occupies 372–804 (RAKIAIVGMS…GGNSSVLVED (433 aa)). Active-site for beta-ketoacyl synthase activity residues include cysteine 544, histidine 679, and histidine 723. The tract at residues 905–1206 (FTFTGQGAQY…KALPTLQRNR (302 aa)) is malonyl-CoA:ACP transacylase (MAT) domain. Residue serine 996 is the For acyl/malonyl transferase activity of the active site. The segment at 1300–1616 (TTTLHRIVDE…PRRVLRYILQ (317 aa)) is product template (PT) domain. The segment at 1304-1438 (HRIVDEKSTE…CRIKFSDRST (135 aa)) is N-terminal hotdog fold. Residues 1304–1612 (HRIVDEKSTE…IQGVPRRVLR (309 aa)) form the PKS/mFAS DH domain. Histidine 1336 acts as the Proton acceptor; for dehydratase activity in catalysis. Positions 1465–1612 (TYRFNGPMAY…IQGVPRRVLR (148 aa)) are C-terminal hotdog fold. Residue aspartate 1525 is the Proton donor; for dehydratase activity of the active site. Residues 1655 to 1729 (SGTLTEALRI…DLKRFFDKIN (75 aa)) enclose the Carrier 1 domain. Serine 1689 carries the post-translational modification O-(pantetheine 4'-phosphoryl)serine. The tract at residues 1735–1762 (APAPVSDAPKQLQPSSSPVASATPSAPI) is disordered. Positions 1748–1761 (PSSSPVASATPSAP) are enriched in low complexity. The 75-residue stretch at 1765-1839 (RSKFESVLNI…DLKAHFMSKN (75 aa)) folds into the Carrier 2 domain. An O-(pantetheine 4'-phosphoryl)serine modification is found at serine 1799. Residues 1840 to 1854 (SDNGSSAVLTPQPSR) are compositionally biased toward polar residues. Positions 1840 to 1882 (SDNGSSAVLTPQPSRDSALPERTRPRVADTSDEEDAPVSANEF) are disordered. Positions 1857–1868 (ALPERTRPRVAD) are enriched in basic and acidic residues. Positions 1886–1964 (ARSTSKYMAV…GLRSFFGFES (79 aa)) constitute a Carrier 3 domain. Serine 1923 is modified (O-(pantetheine 4'-phosphoryl)serine). The segment at 1967–1993 (TATNPTASQSSSSISSGTSVFDTSPSP) is disordered. Positions 1969 to 1990 (TNPTASQSSSSISSGTSVFDTS) are enriched in low complexity. The interval 2020-2271 (PLPPATSVTL…GADHFSLLVS (252 aa)) is thioesterase (TE) domain.

It localises to the cytoplasmic vesicle. The enzyme catalyses 7 malonyl-CoA + acetyl-CoA + 7 H(+) = 7,9,10-trihydroxy-3-(2-oxopropyl)-1H-benzo[g]isochromen-1-one + 7 CO2 + 8 CoA + 2 H2O. It participates in secondary metabolite biosynthesis. In terms of biological role, non-reducing polyketide synthase; part of the gene cluster that mediates the biosynthesis of viriditoxin, one of the 'classical' secondary metabolites produced by fungi and that has antibacterial activity. The first step is performed by the polyketide synthase VdtA which condenses one acetyl-CoA and 6 malonyl-CoA units to form the heptaketide monomer backbone of viriditoxin. The product of VdtA is then O-methylated on C7 by the O-methyltransferase VdtC. The O-methyl group is important for the stereoselective coupling of the monomers at the final step of viriditoxin biosynthesis. The short-chain dehydrogenase/reductase VdtF then acts as a stereospecific reductase converting the pyrone to dihydropyrone via the reduction of the C3-C4 double bond. The FAD-binding monooxygenase VdtE then converts the ketone group into a methyl-ester group to yield semi-viriditoxin. Finally, the laccase VdtB is involved in dimerization of 2 semi-viriditoxin molecules to yield the final viriditoxin. VdtB is responsible for the regioselective 6,6'-coupling of semi-viriditoxin, which yields (M)-viriditoxin and (P)-viriditoxin at a ratio of 1:2. The non-catalytic carboxylesterase-like protein VdtD affects the stereochemistical outcome of the coupling. The highly reducing polyketide synthase VdtX is not involved in viriditoxin synthesis, but might possibly play a role in the production of additional metabolites not identified yet. The chain is Non-reducing polyketide synthase VdtA from Byssochlamys spectabilis (Paecilomyces variotii).